The sequence spans 85 residues: Dr hemagglutinin AFA-III operon regulatory protein AfaF (85 aa).

This sequence to E.coli PapI and DaaF.

Its function is as follows. May have a possible regulatory function on the expression of the other AFA-III genes. The sequence is that of Dr hemagglutinin AFA-III operon regulatory protein AfaF (afaF) from Escherichia coli.